Here is a 651-residue protein sequence, read N- to C-terminus: DNA mismatch repair protein MutL (651 aa).

The disordered stretch occupies residues Arg-336 to Pro-398. The span at Ala-385–Gln-394 shows a compositional bias: polar residues.

It belongs to the DNA mismatch repair MutL/HexB family.

Functionally, this protein is involved in the repair of mismatches in DNA. It is required for dam-dependent methyl-directed DNA mismatch repair. May act as a 'molecular matchmaker', a protein that promotes the formation of a stable complex between two or more DNA-binding proteins in an ATP-dependent manner without itself being part of a final effector complex. This Pectobacterium atrosepticum (strain SCRI 1043 / ATCC BAA-672) (Erwinia carotovora subsp. atroseptica) protein is DNA mismatch repair protein MutL.